A 423-amino-acid polypeptide reads, in one-letter code: MENPSLRELDHRNIWHPYAAPGVRNRLVTKTDGVFLTLEDGSTVIDAMSSWWSAIHGHGHPRLKAAAQKQIDTMSHVMFGGLTHEPAIKLTHKLLNLTGNSFDHVFYSDSGSVSVEVAIKMALQASKGQGHPERTKLLTWRSGYHGDTFTAMSVCDPENGMHSLWKGTLPEQIFAPAPPVRGSSPQAISEYLRSMELLIDETVSAIIIEPIVQGAGGMRFHDVALIEGVATLCKKHDRFLIVDEIATGFGRTGELFATLSNGLQPDIMCVGKALTGGFMSFAATLCTDKVAQLISTPNGGGALMHGPTFMANPLACAVSHASLEIIETGMWQKQVKRIEAELIAGLSPLQHLPGVADVRVLGAIGVIEMEQNVNVEEATQAALDHGVWIRPFGRLLYVMPPYITTSEQCAQICTALHAAVKGK.

Trp51 provides a ligand contact to substrate. Gly111 to Ser112 is a pyridoxal 5'-phosphate binding site. Substrate is bound at residue Tyr144. Asp243 is a binding site for pyridoxal 5'-phosphate. Substrate contacts are provided by Lys272 and Gly306. Lys272 carries the post-translational modification N6-(pyridoxal phosphate)lysine. Pro307–Thr308 provides a ligand contact to pyridoxal 5'-phosphate. Substrate is bound at residue Arg390.

The protein belongs to the class-III pyridoxal-phosphate-dependent aminotransferase family. BioA subfamily. In terms of assembly, homodimer. Requires pyridoxal 5'-phosphate as cofactor.

The protein localises to the cytoplasm. It carries out the reaction (8S)-8-amino-7-oxononanoate + S-adenosyl-L-methionine = S-adenosyl-4-methylsulfanyl-2-oxobutanoate + (7R,8S)-7,8-diammoniononanoate. The protein operates within cofactor biosynthesis; biotin biosynthesis; 7,8-diaminononanoate from 8-amino-7-oxononanoate (SAM route): step 1/1. Functionally, catalyzes the transfer of the alpha-amino group from S-adenosyl-L-methionine (SAM) to 7-keto-8-aminopelargonic acid (KAPA) to form 7,8-diaminopelargonic acid (DAPA). It is the only aminotransferase known to utilize SAM as an amino donor. This chain is Adenosylmethionine-8-amino-7-oxononanoate aminotransferase, found in Corynebacterium glutamicum (strain ATCC 13032 / DSM 20300 / JCM 1318 / BCRC 11384 / CCUG 27702 / LMG 3730 / NBRC 12168 / NCIMB 10025 / NRRL B-2784 / 534).